The sequence spans 77 residues: Conotoxin PnMKLT1-0122 (77 aa).

The signal sequence occupies residues methionine 1–alanine 22. Residues glutamate 23–asparagine 49 constitute a propeptide that is removed on maturation. 3 disulfides stabilise this stretch: cysteine 52–cysteine 67, cysteine 59–cysteine 71, and cysteine 66–cysteine 76.

It belongs to the conotoxin O1 superfamily. As to expression, expressed by the venom duct.

It is found in the secreted. The polypeptide is Conotoxin PnMKLT1-0122 (Conus pennaceus (Feathered cone)).